A 147-amino-acid polypeptide reads, in one-letter code: UPF0306 protein YhbP (147 aa).

The protein belongs to the UPF0306 family.

The protein is UPF0306 protein YhbP of Salmonella choleraesuis (strain SC-B67).